A 329-amino-acid chain; its full sequence is Terpene synthase 7 (329 aa).

Residues 99 to 104 (DDLYLE) carry the DDxx(x)D/E motif motif. An NDxxSxxxD/E motif motif is present at residues 230–238 (NDIHSFNKE).

The protein belongs to the terpene synthase family.

Functionally, terpene synthase that converts its substrate farnesyl diphosphate (FPP) into 6 yet unidentified sesquiterpenes. In Dictyostelium purpureum (Slime mold), this protein is Terpene synthase 7.